A 101-amino-acid polypeptide reads, in one-letter code: Apolipoprotein C-II (101 aa).

Positions 1–22 are cleaved as a signal peptide; the sequence is MGTRYLLVLLLVLLVLGFEVQG. The segment at 66–74 is lipid binding; that stretch reads TMDEKIRDI. The interval 78 to 101 is lipoprotein lipase cofactor; sequence STAAVSTYAGIFTDQLLSMLKGDS.

The protein belongs to the apolipoprotein C2 family. Post-translationally, proapolipoprotein C-II is synthesized as a sialic acid containing glycoprotein which is subsequently desialylated prior to its proteolytic processing. In terms of processing, proapolipoprotein C-II, the major form found in plasma undergoes proteolytic cleavage of its N-terminal hexapeptide to generate apolipoprotein C-II, which occurs as the minor form in plasma. In terms of tissue distribution, highly expressed in the liver. Moderately expressed in the ileum, jejunum and ovary.

The protein localises to the secreted. Functionally, component of chylomicrons, very low-density lipoproteins (VLDL), low-density lipoproteins (LDL), and high-density lipoproteins (HDL) in plasma. Plays an important role in lipoprotein metabolism as an activator of lipoprotein lipase. Both proapolipoprotein C-II and apolipoprotein C-II can activate lipoprotein lipase. In Canis lupus familiaris (Dog), this protein is Apolipoprotein C-II (APOC2).